The sequence spans 94 residues: DNA-directed RNA polymerase subunit omega (94 aa).

Belongs to the RNA polymerase subunit omega family. The RNAP catalytic core consists of 2 alpha, 1 beta, 1 beta' and 1 omega subunit. When a sigma factor is associated with the core the holoenzyme is formed, which can initiate transcription.

It catalyses the reaction RNA(n) + a ribonucleoside 5'-triphosphate = RNA(n+1) + diphosphate. In terms of biological role, promotes RNA polymerase assembly. Latches the N- and C-terminal regions of the beta' subunit thereby facilitating its interaction with the beta and alpha subunits. In Parafrankia sp. (strain EAN1pec), this protein is DNA-directed RNA polymerase subunit omega.